The following is a 410-amino-acid chain: Enterobactin exporter EntS (410 aa).

The Cytoplasmic portion of the chain corresponds to 1–21; the sequence is MNKQSWLLNLSLLKTHPAFRA. Residues 22-42 form a helical membrane-spanning segment; the sequence is VFLARFISIVSLGLLGVAVPV. Residues 43-55 lie on the Periplasmic side of the membrane; that stretch reads QIQMMTHSTWQVG. The chain crosses the membrane as a helical span at residues 56 to 76; the sequence is LSVTLTGGAMFVGLMVGGVLA. At 77–83 the chain is on the cytoplasmic side; it reads DRYERKK. Residues 84-104 form a helical membrane-spanning segment; it reads VILLARGTCGIGFIGLCLNAL. The Periplasmic portion of the chain corresponds to 105–109; it reads LPEPS. The helical transmembrane segment at 110-130 threads the bilayer; it reads LLAIYLLGLWDGFFASLGVTA. Residues 131 to 156 lie on the Cytoplasmic side of the membrane; sequence LLAATSALVGRENLMQAGAITMLTVR. Residues 157 to 177 form a helical membrane-spanning segment; sequence LGSVISPMIGGLLLATGGVAW. A topological domain (periplasmic) is located at residue Asn-178. Residues 179-199 traverse the membrane as a helical segment; the sequence is YGLAAAGTFITLLPLLSLPEL. At 200–218 the chain is on the cytoplasmic side; it reads PPPPQPLEHPLKSLLAGFR. The helical transmembrane segment at 219 to 233 threads the bilayer; it reads FLLASPLLGGLLTMA. Over 234-250 the chain is Periplasmic; that stretch reads SAVLVLYPALADNWQMS. Residues 251–271 form a helical membrane-spanning segment; the sequence is AAQIGFLYAAIPLGAAIGALT. Over 272 to 281 the chain is Cytoplasmic; the sequence is SGKLAHSARP. Residues 282 to 301 form a helical membrane-spanning segment; that stretch reads GLLMLLSTLGSFLAIGLFGL. At 302 to 307 the chain is on the periplasmic side; the sequence is MPMWIL. The helical transmembrane segment at 308–330 threads the bilayer; that stretch reads GVVCLALFGWLSAVSSLLQYTML. The Cytoplasmic segment spans residues 331–350; it reads QTQTPEAMLGRINGLWTAQN. Residues 351-371 traverse the membrane as a helical segment; it reads VTGDAIGAALLGGLGAMMTPV. A topological domain (periplasmic) is located at residue Ala-372. The helical transmembrane segment at 373-393 threads the bilayer; sequence SASASGFGLLIIGVLLLLVLV. The Cytoplasmic portion of the chain corresponds to 394 to 410; sequence ELRRFRQTPPQVTASDS.

This sequence belongs to the major facilitator superfamily. EntS (TC 2.A.1.38) family.

The protein localises to the cell inner membrane. In terms of biological role, component of an export pathway for enterobactin. The protein is Enterobactin exporter EntS of Shigella flexneri.